The sequence spans 127 residues: Aspartate 1-decarboxylase (127 aa).

Ser25 (schiff-base intermediate with substrate; via pyruvic acid) is an active-site residue. At Ser25 the chain carries Pyruvic acid (Ser). Residue Thr57 coordinates substrate. The active-site Proton donor is the Tyr58. Substrate is bound at residue 73-75 (GAA).

The protein belongs to the PanD family. Heterooctamer of four alpha and four beta subunits. Pyruvate is required as a cofactor. In terms of processing, is synthesized initially as an inactive proenzyme, which is activated by self-cleavage at a specific serine bond to produce a beta-subunit with a hydroxyl group at its C-terminus and an alpha-subunit with a pyruvoyl group at its N-terminus.

It is found in the cytoplasm. The catalysed reaction is L-aspartate + H(+) = beta-alanine + CO2. It functions in the pathway cofactor biosynthesis; (R)-pantothenate biosynthesis; beta-alanine from L-aspartate: step 1/1. In terms of biological role, catalyzes the pyruvoyl-dependent decarboxylation of aspartate to produce beta-alanine. The polypeptide is Aspartate 1-decarboxylase (Bacillus cereus (strain G9842)).